A 63-amino-acid chain; its full sequence is 2-hydroxymuconate tautomerase (63 aa).

The Proton acceptor; via imino nitrogen role is filled by Pro2.

This sequence belongs to the 4-oxalocrotonate tautomerase family. As to quaternary structure, homohexamer.

It carries out the reaction (2Z,4E)-2-hydroxyhexa-2,4-dienedioate = (3E)-2-oxohex-3-enedioate. It functions in the pathway xenobiotic degradation; toluene degradation. In terms of biological role, catalyzes the ketonization of 2-hydroxymuconate stereoselectively to yield 2-oxo-3-hexenedioate. The polypeptide is 2-hydroxymuconate tautomerase (dmpI) (Pseudomonas sp. (strain CF600)).